The chain runs to 181 residues: Isopentenyl-diphosphate Delta-isomerase (181 aa).

H25 and H32 together coordinate Mn(2+). The region spanning P30–M164 is the Nudix hydrolase domain. The active site involves C67. H69 contacts Mn(2+). Residue E87 participates in Mg(2+) binding. Mn(2+) contacts are provided by E114 and E116. E116 is a catalytic residue.

This sequence belongs to the IPP isomerase type 1 family. In terms of assembly, homodimer. Mg(2+) is required as a cofactor. Mn(2+) serves as cofactor.

The protein localises to the cytoplasm. The enzyme catalyses isopentenyl diphosphate = dimethylallyl diphosphate. It functions in the pathway isoprenoid biosynthesis; dimethylallyl diphosphate biosynthesis; dimethylallyl diphosphate from isopentenyl diphosphate: step 1/1. Functionally, catalyzes the 1,3-allylic rearrangement of the homoallylic substrate isopentenyl (IPP) to its highly electrophilic allylic isomer, dimethylallyl diphosphate (DMAPP). The polypeptide is Isopentenyl-diphosphate Delta-isomerase (Salmonella paratyphi B (strain ATCC BAA-1250 / SPB7)).